The primary structure comprises 474 residues: Phenolic acid decarboxylase (474 aa).

Mn(2+) is bound by residues Asn161, His182, and Glu224. Residues 161 to 166 and 181 to 182 each bind prenylated FMN; these read NVGTYR and MH. The active-site Proton donor is Glu273.

It belongs to the UbiD family. YclC subfamily. Prenylated FMN is required as a cofactor. Requires Mn(2+) as cofactor.

The catalysed reaction is vanillate + H(+) = guaiacol + CO2. In terms of biological role, involved in the non-oxidative decarboxylation and detoxification of phenolic derivatives under both aerobic and anaerobic conditions. Phenolic acid decarboxylase that catalyzes the reversible decarboxylation of vanillate. This Streptomyces sp. (strain D7) protein is Phenolic acid decarboxylase.